The following is a 248-amino-acid chain: MRLFPAIDLKEGKAVRLLQGRMEDATVYGEQPVEVARKFKEQGADSLHVVDLDGAFAGKPVNDAVILKLIQSSGLRVQVGGGIRTLERMEELLRLGVERVILGTVAVRTPELVEKAVQRFGEAVVIGIDAKDGLVAVQGWAEKTEIRALDLALRMKKVGVKHLVFTDISRDGMLQGPNIQSTVELARLSGLQVVASGGVSRLEDLRLLQEEAKRGVSLEGAIVGKALYTGAFSLAEALRVVGQRSEGK.

Asp-8 serves as the catalytic Proton acceptor. Asp-129 serves as the catalytic Proton donor.

It belongs to the HisA/HisF family.

It is found in the cytoplasm. The catalysed reaction is 1-(5-phospho-beta-D-ribosyl)-5-[(5-phospho-beta-D-ribosylamino)methylideneamino]imidazole-4-carboxamide = 5-[(5-phospho-1-deoxy-D-ribulos-1-ylimino)methylamino]-1-(5-phospho-beta-D-ribosyl)imidazole-4-carboxamide. It functions in the pathway amino-acid biosynthesis; L-histidine biosynthesis; L-histidine from 5-phospho-alpha-D-ribose 1-diphosphate: step 4/9. This Desulfitobacterium hafniense (strain Y51) protein is 1-(5-phosphoribosyl)-5-[(5-phosphoribosylamino)methylideneamino] imidazole-4-carboxamide isomerase.